Here is a 530-residue protein sequence, read N- to C-terminus: Phosphoenolpyruvate carboxykinase (ATP) (530 aa).

Residues R58, Y195, and K201 each coordinate substrate. Residues K201, H220, and 236 to 244 (GLSGTGKTT) each bind ATP. 2 residues coordinate Mn(2+): K201 and H220. Position 257 (D257) interacts with Mn(2+). ATP is bound by residues E285, R321, 440 to 441 (RI), and T446. Residue R321 participates in substrate binding.

Belongs to the phosphoenolpyruvate carboxykinase (ATP) family. It depends on Mn(2+) as a cofactor.

The protein localises to the cytoplasm. It catalyses the reaction oxaloacetate + ATP = phosphoenolpyruvate + ADP + CO2. It participates in carbohydrate biosynthesis; gluconeogenesis. Involved in the gluconeogenesis. Catalyzes the conversion of oxaloacetate (OAA) to phosphoenolpyruvate (PEP) through direct phosphoryl transfer between the nucleoside triphosphate and OAA. The protein is Phosphoenolpyruvate carboxykinase (ATP) of Staphylococcus epidermidis (strain ATCC 35984 / DSM 28319 / BCRC 17069 / CCUG 31568 / BM 3577 / RP62A).